A 246-amino-acid polypeptide reads, in one-letter code: NAD(P)H-hydrate epimerase (246 aa).

The YjeF N-terminal domain maps to 12–234 (AAEIDKELMG…DFANKFGFEP (223 aa)). 69–73 (NNGGD) serves as a coordination point for (6S)-NADPHX. K(+)-binding residues include Asn70 and Asp138. Residues 142-148 (GFSFKPP) and Asp173 contribute to the (6S)-NADPHX site. Thr176 contacts K(+).

This sequence belongs to the NnrE/AIBP family. Requires K(+) as cofactor.

The protein localises to the cytoplasm. It is found in the mitochondrion. The catalysed reaction is (6R)-NADHX = (6S)-NADHX. It catalyses the reaction (6R)-NADPHX = (6S)-NADPHX. Catalyzes the epimerization of the S- and R-forms of NAD(P)HX, a damaged form of NAD(P)H that is a result of enzymatic or heat-dependent hydration. This is a prerequisite for the S-specific NAD(P)H-hydrate dehydratase to allow the repair of both epimers of NAD(P)HX. This Saccharomyces cerevisiae (strain ATCC 204508 / S288c) (Baker's yeast) protein is NAD(P)H-hydrate epimerase.